The chain runs to 169 residues: Cell cycle link protein (169 aa).

Residues 9 to 22 form a binding to host SKP1 protein region; that stretch reads LPEELRQKIVHDHL. The LXCXE motif, interaction with host RBR signature appears at 110–114; that stretch reads LLCRE.

It belongs to the nanovirus Clink protein family. Interacts with host SKP1. Interacts (via LXCXE domain) with host retinoblastoma-related protein 1 (RBR1). Interacts (via LXCXE domain) with retinoblastoma-related proteins (RBR).

Functionally, interacts with and disrupts the function of host retinoblastoma-related proteins RBR, which are key regulators of the cell cycle. Induces transcriptional activation of E2F-regulated S-phase and G2/M-phase-specific genes. Inactivation of the ability of RBR to arrest the cell cycle leads to the stimulation of viral DNA replication. The protein is Cell cycle link protein (DNA-C) of Cicer arietinum (Chickpea).